The primary structure comprises 93 residues: Defensin-like protein 210 (93 aa).

The signal sequence occupies residues 1 to 19; the sequence is MKTIILFLTLLVISSSCTS. Intrachain disulfides connect Cys63/Cys80, Cys66/Cys85, and Cys70/Cys87.

It belongs to the DEFL family.

Its subcellular location is the secreted. The sequence is that of Defensin-like protein 210 from Arabidopsis thaliana (Mouse-ear cress).